The chain runs to 518 residues: Suppressor of hairless homolog (518 aa).

The segment at 22 to 59 (ETDQQRSHVKERVNGTPNQNGGTSTSSKPRSVFENRPP) is disordered. Residues 24–34 (DQQRSHVKERV) show a composition bias toward basic and acidic residues. The segment covering 36-50 (GTPNQNGGTSTSSKP) has biased composition (polar residues). 3 DNA-binding regions span residues 89-96 (KSYGNEKR), 223-232 (RLRSQTVSTR), and 296-328 (RKVD…ERMY). An IPT/TIG domain is found at 386-476 (PVVHSLQLNG…YPTNLTFTFT (91 aa)).

The protein belongs to the Su(H) family. Interacts with activated Notch proteins.

It is found in the nucleus. Transcriptional regulator that plays a central role in Notch signaling, a signaling pathway involved in cell-cell communication that regulates a broad spectrum of cell-fate determinations. Acts as a transcriptional repressor when it is not associated with Notch proteins. When associated with some Notch protein, it acts as a transcriptional activator that activates transcription of Notch target genes. In Halocynthia roretzi (Sea squirt), this protein is Suppressor of hairless homolog (RBP-JK).